Here is a 480-residue protein sequence, read N- to C-terminus: Membrane-bound lytic murein transglycosylase F (480 aa).

Residues 1 to 15 (MKKLLFVLLTITLLA) form the signal peptide. Residues 16-259 (SCQKVSVEQT…HLNEKYFAHV (244 aa)) are non-LT domain. Residues 260–480 (KRFDYVDTRA…QENLSGAQPQ (221 aa)) form an LT domain region. Residue E304 is part of the active site.

It in the N-terminal section; belongs to the bacterial solute-binding protein 3 family. The protein in the C-terminal section; belongs to the transglycosylase Slt family.

It is found in the cell outer membrane. It carries out the reaction Exolytic cleavage of the (1-&gt;4)-beta-glycosidic linkage between N-acetylmuramic acid (MurNAc) and N-acetylglucosamine (GlcNAc) residues in peptidoglycan, from either the reducing or the non-reducing ends of the peptidoglycan chains, with concomitant formation of a 1,6-anhydrobond in the MurNAc residue.. Functionally, murein-degrading enzyme that degrades murein glycan strands and insoluble, high-molecular weight murein sacculi, with the concomitant formation of a 1,6-anhydromuramoyl product. Lytic transglycosylases (LTs) play an integral role in the metabolism of the peptidoglycan (PG) sacculus. Their lytic action creates space within the PG sacculus to allow for its expansion as well as for the insertion of various structures such as secretion systems and flagella. In Shewanella sediminis (strain HAW-EB3), this protein is Membrane-bound lytic murein transglycosylase F.